The primary structure comprises 253 residues: Ubiquinone biosynthesis O-methyltransferase (253 aa).

The S-adenosyl-L-methionine site is built by Arg-47, Gly-78, Asp-99, and Met-141.

The protein belongs to the methyltransferase superfamily. UbiG/COQ3 family.

The enzyme catalyses a 3-demethylubiquinol + S-adenosyl-L-methionine = a ubiquinol + S-adenosyl-L-homocysteine + H(+). It catalyses the reaction a 3-(all-trans-polyprenyl)benzene-1,2-diol + S-adenosyl-L-methionine = a 2-methoxy-6-(all-trans-polyprenyl)phenol + S-adenosyl-L-homocysteine + H(+). The protein operates within cofactor biosynthesis; ubiquinone biosynthesis. Its function is as follows. O-methyltransferase that catalyzes the 2 O-methylation steps in the ubiquinone biosynthetic pathway. This Rhodopseudomonas palustris (strain HaA2) protein is Ubiquinone biosynthesis O-methyltransferase.